The sequence spans 493 residues: MSFVQIRHISSQINRKTVSIVGSGPSGFYTAYHLLKKSPIPLNVTIWEKLPVPFGLSRYGVAPDHPEVKNCEETFTTCAEEFSSPTNQKHKFSFVGGITIGKEILLKELLDNQDAVILSYGCTGDRKLNIPGELGTKGVFSSREFVNWYNGHPDFAKDKRFTDFDWSKVSKVGIIGNGNVALDITRVLISNQIDEIWENTDISSLALNLLRRAPVKDVKLIARRDFVHSKFTNKELRELWELEKYGIRGRIDPKFFQKEMFDPSKYDRAFNRRVEMCSEYLKPFNERSKKNYKKAPPPSSGYDKFWELDYLKTPLKINRDDFGAINSLSLCNNRLNEDNSLQPLKDVNNIMTYKVDLLITSLGYAGVPMPEFSKLSIGFDKDHIANKQGRVLTSSGEIFPHLYASGWIRKGSQGVIASTMQDAFEVGDRVIQDLVVSGALSLENSIDLSNIKHTTWKDWERINKKELLRGKKEHKTRSKFLTFEELWNGVEGI.

Serine 26, glutamate 48, leucine 56, and isoleucine 100 together coordinate FAD. NADP(+)-binding positions include 177 to 180, 223 to 224, and glutamate 235; these read NGNV and RR. FAD-binding positions include tryptophan 407 and 414-416; that span reads GVI. Position 414 (glycine 414) interacts with NADP(+).

This sequence belongs to the ferredoxin--NADP reductase type 1 family. Requires FAD as cofactor.

The protein localises to the mitochondrion inner membrane. It carries out the reaction 2 reduced [adrenodoxin] + NADP(+) + H(+) = 2 oxidized [adrenodoxin] + NADPH. Functionally, adrenodoxin reductase transfers electrons from NADPH to adrenodoxin, which is involved in heme A biosynthesis and in iron-sulfur cluster assembly. Involved in the electron transfer to heme A synthase COX15, a heme protein that catalyzes the conversion of heme O to heme A. Required for the de novo synthesis of Fe-S clusters on iron sulfur cluster assembly protein ISU1. Involved in electron delivery for Fe-S cluster synthesis. Essential for coenzyme Q biosynthesis. May be involved in the electron transfer required for the hydroxylation reaction performed by COQ6. May play a role in cellular and mitochondrial iron homeostasis. The protein is Probable NADPH:adrenodoxin oxidoreductase, mitochondrial of Saccharomyces cerevisiae (strain ATCC 204508 / S288c) (Baker's yeast).